The sequence spans 267 residues: Probable beta-lactamase YbxI (267 aa).

Residues 1-23 form the signal peptide; it reads MKKWIYVVLVLSIAGIGGFSVHA. The active-site Acyl-ester intermediate is Ser-76. At Lys-79 the chain carries N6-carboxylysine. A substrate-binding site is contributed by 214-216; sequence KTG.

This sequence belongs to the class-D beta-lactamase family.

It catalyses the reaction a beta-lactam + H2O = a substituted beta-amino acid. This Bacillus subtilis (strain 168) protein is Probable beta-lactamase YbxI (ybxI).